We begin with the raw amino-acid sequence, 2135 residues long: Nonribosomal peptide synthetase gliP (2135 aa).

Residues 34–424 (TYTELDVASS…LPADVEEPLR (391 aa)) form an adenylation 1 region. One can recognise a Carrier 1 domain in the interval 519–594 (TEREQVIAEC…GILPYARDLA (76 aa)). At Ser555 the chain carries O-(pantetheine 4'-phosphoryl)serine. Positions 663–913 (AEHICNAWRQ…MATLPLVCRI (251 aa)) are condensation 1. The tract at residues 1078–1458 (YRELDQKSNA…YQEEPRLTQA (381 aa)) is adenylation 2. One can recognise a Carrier 2 domain in the interval 1544–1622 (ASIADGIATL…EQVELVRRKR (79 aa)). O-(pantetheine 4'-phosphoryl)serine is present on Ser1582. The condensation 2 stretch occupies residues 1642 to 1905 (SPLERQTWFQ…FLDRLPLRFK (264 aa)). Positions 2061 to 2134 (RRLVGILQRE…DLAQRLYRQV (74 aa)) constitute a Carrier 3 domain. Residue Ser2095 is modified to O-(pantetheine 4'-phosphoryl)serine.

It belongs to the NRP synthetase family.

The protein operates within mycotoxin biosynthesis. In terms of biological role, nonribosomal peptide synthetase; part of the gene cluster that mediates the biosynthesis of gliotoxin, a member of the epipolythiodioxopiperazine (ETP) class of toxins characterized by a disulfide-bridged cyclic dipeptide. The first step in gliotoxin biosynthesis is the condensation of serine and phenylalanine to form the cyclo-L-phenylalanyl-L-serine diketopiperazine (DKP) by the NRPS gliP. GliP is also able to produce the DKP cyclo-L-tryptophanyl-L-serine, suggesting that the substrate specificity of the first adenylation (A) domain in gliP is sufficiently relaxed to accommodate both L-Phe and L-Trp. The cytochrome P450 monooxygenase gliC has been shown to catalyze the subsequent hydroxylation of the alpha-carbon of L-Phe in cyclo-L-phenylalanyl-L-serine whereas the second cytochrome P450 enzyme, gliF, is presumably involved in the modification of the DKP side chain. The glutathione S-transferase (GST) gliG then forms a bis-glutathionylated biosynthetic intermediate which is responsible for the sulfurization of gliotoxin. This bis-glutathionylated intermediate is subsequently processed by the gamma-glutamyl cyclotransferase gliK to remove both gamma-glutamyl moieties. Subsequent processing via gliI yields a biosynthetic intermediate, which is N-methylated via the N-methyltransferase gliN, before the gliotoxin oxidoreductase gliT-mediated disulfide bridge closure. GliN-mediated amide methylation confers stability to ETP, damping the spontaneous formation of tri- and tetrasulfides. Intracellular dithiol gliotoxin oxidized by gliT is subsequently effluxed by gliA. Gliotoxin contributes to pathogenesis during invasive aspergillosis. In macrophages and neutrophils, gliotoxin showed inhibition of various different cell functions including cytokine production, antigen presentation, phagocytosis, and production of reactive oxygen species. This chain is Nonribosomal peptide synthetase gliP, found in Aspergillus fumigatus (strain ATCC MYA-4609 / CBS 101355 / FGSC A1100 / Af293) (Neosartorya fumigata).